The sequence spans 436 residues: uncharacterized protein (436 aa).

A helical transmembrane segment spans residues 1–21; that stretch reads MILLQVICTIWTCLFIPLLNA. BNR repeat units lie at residues 57–68 and 101–112; these read WISSDSGENWEA and YVTDDRGKSWRA. A glycan (N-linked (GlcNAc...) asparagine) is linked at Asn-157. 2 BNR repeats span residues 229–240 and 394–405; these read ALSTDGGKTFKK and KISVDNGLTWSN.

The protein localises to the membrane. This is an uncharacterized protein from Saccharomyces cerevisiae (strain ATCC 204508 / S288c) (Baker's yeast).